We begin with the raw amino-acid sequence, 216 residues long: Gamma-glutamylcyclotransferase 2-1 (216 aa).

5–10 (VFGYGS) contacts substrate. The active-site Proton acceptor is Glu87.

This sequence belongs to the gamma-glutamylcyclotransferase family. Mn(2+) serves as cofactor. Expressed in the central vascular bundle of roots, leaf veins, hydathodes, cauline leaves, shoot apex, sepal veins, flower receptacles and developing seeds.

Its subcellular location is the cytoplasm. It carries out the reaction an alpha-(gamma-L-glutamyl)-L-amino acid = 5-oxo-L-proline + an L-alpha-amino acid. Its function is as follows. Catalyzes the formation of 5-oxoproline from gamma-glutamyl dipeptides and plays a significant role in glutathione (GSH) homeostasis. Converts both GSH and gamma-glutamyl-L-alanine to 5-oxoproline in vitro. Plays a role in detoxification of heavy metals and metalloids by recycling glutamate and maintaining GSH homeostasis. The protein is Gamma-glutamylcyclotransferase 2-1 of Arabidopsis thaliana (Mouse-ear cress).